Reading from the N-terminus, the 389-residue chain is Lipid-A-disaccharide synthase (389 aa).

This sequence belongs to the LpxB family.

The enzyme catalyses a lipid X + a UDP-2-N,3-O-bis[(3R)-3-hydroxyacyl]-alpha-D-glucosamine = a lipid A disaccharide + UDP + H(+). It participates in bacterial outer membrane biogenesis; LPS lipid A biosynthesis. Condensation of UDP-2,3-diacylglucosamine and 2,3-diacylglucosamine-1-phosphate to form lipid A disaccharide, a precursor of lipid A, a phosphorylated glycolipid that anchors the lipopolysaccharide to the outer membrane of the cell. This chain is Lipid-A-disaccharide synthase, found in Verminephrobacter eiseniae (strain EF01-2).